Reading from the N-terminus, the 95-residue chain is UPF0473 protein PEPE_1260 (95 aa).

It belongs to the UPF0473 family.

This Pediococcus pentosaceus (strain ATCC 25745 / CCUG 21536 / LMG 10740 / 183-1w) protein is UPF0473 protein PEPE_1260.